The sequence spans 70 residues: Large ribosomal subunit protein bL31 (70 aa).

Positions 16, 18, 36, and 39 each coordinate Zn(2+).

The protein belongs to the bacterial ribosomal protein bL31 family. Type A subfamily. Part of the 50S ribosomal subunit. Zn(2+) is required as a cofactor.

In terms of biological role, binds the 23S rRNA. The protein is Large ribosomal subunit protein bL31 of Fervidobacterium nodosum (strain ATCC 35602 / DSM 5306 / Rt17-B1).